Reading from the N-terminus, the 38-residue chain is Mating hormone A-factor 2 (38 aa).

Residues 1–12 (MQPITTASTQAT) show a composition bias toward polar residues. The interval 1–20 (MQPITTASTQATQKDKSSEK) is disordered. A propeptide spanning residues 1 to 23 (MQPITTASTQATQKDKSSEKKDN) is cleaved from the precursor. Residue Cys-35 is modified to Cysteine methyl ester. Cys-35 is lipidated: S-farnesyl cysteine. Positions 36 to 38 (VIA) are cleaved as a propeptide — removed in mature form.

The protein localises to the cell membrane. Functionally, the active factor is excreted into the culture medium by haploid cells of the A mating type and acts on cells of the opposite mating type (type alpha). It mediates the conjugation process between the two types by inhibiting the initiation of DNA synthesis in type alpha cells and synchronizing them with type A. This chain is Mating hormone A-factor 2 (MFA2), found in Saccharomyces cerevisiae (strain ATCC 204508 / S288c) (Baker's yeast).